Here is a 1076-residue protein sequence, read N- to C-terminus: Protein EXPORTIN 1B (1076 aa).

In terms of domain architecture, Importin N-terminal spans 37–103 (ADNILRDLKA…KNYISDVIVQ (67 aa)). HEAT repeat units follow at residues 135–171 (AKWKSFIPDLVIAAKTSETICENCMAILKLLSEEVFD), 232–267 (IFESPLLEILLKFFPVPAYRNLTLQCLSEVASLNFG), 282–319 (MNQLQAILPLNLNIPEAYSTGSSEEQAFIQNLALFFTS), 475–514 (DTEKQMLSKLSKQLSGEEWAWNNLNTLCWAIGSISGSMVV), 564–601 (KFLKTVVHKLFEFMHETHPGVQDMACDTFLKIVQKCKR), 613–650 (PFVSELLSGLATIVGDLQPHQIHTFYESVGSMIQAESD), 683–720 (LKEPDVIRTVLNILQTNTRVATSLGTFFLSQISLIFLD), 757–794 (REILKLIETFLDKAENQPHIGKQFVPPMMDQVLGDYAR), 799–836 (ARESEVLSLFATIINKYKVVMRDEVPLIFEAVFQCTLE), 895–935 (ETGL…VLTD), and 943–988 (KLHV…YTTK).

Belongs to the exportin family. Present in mature pollen grains, unpollinated pistils, and 2-week-old seedlings.

The protein resides in the nucleus. The protein localises to the nuclear pore complex. It is found in the nucleus membrane. Functionally, receptor for the leucine-rich nuclear export signal (NES). Binds cooperatively to the NES on its target protein and to the small GTPase Ran in its active GTP-bound form. Required for the maternal-to-embryonic transition and during gametophyte development. This chain is Protein EXPORTIN 1B, found in Arabidopsis thaliana (Mouse-ear cress).